A 215-amino-acid chain; its full sequence is UPF0441 protein SG0265 (215 aa).

This sequence belongs to the UPF0441 family.

The polypeptide is UPF0441 protein SG0265 (Sodalis glossinidius (strain morsitans)).